The sequence spans 526 residues: Peptide chain release factor 3 (526 aa).

Residues 9–277 (NKRRTFAIIS…DFVEYAPGPQ (269 aa)) form the tr-type G domain. GTP-binding positions include 18 to 25 (SHPDAGKT), 86 to 90 (DTPGH), and 140 to 143 (NKLD).

It belongs to the TRAFAC class translation factor GTPase superfamily. Classic translation factor GTPase family. PrfC subfamily.

It is found in the cytoplasm. Increases the formation of ribosomal termination complexes and stimulates activities of RF-1 and RF-2. It binds guanine nucleotides and has strong preference for UGA stop codons. It may interact directly with the ribosome. The stimulation of RF-1 and RF-2 is significantly reduced by GTP and GDP, but not by GMP. This is Peptide chain release factor 3 from Legionella pneumophila (strain Corby).